A 66-amino-acid chain; its full sequence is MRRLYRHLASFFLLPSCPGNTIQSITSYPANALLRSFRHVSTETPVRNRVHNRDSQSCPFFPLMDD.

The first 19 residues, 1–19, serve as a signal peptide directing secretion; the sequence is MRRLYRHLASFFLLPSCPG.

This is an uncharacterized protein from Saccharomyces cerevisiae (strain ATCC 204508 / S288c) (Baker's yeast).